Here is a 556-residue protein sequence, read N- to C-terminus: Endoplasmic reticulum membrane protein 65 (556 aa).

At 1–87 (MQHKDTAVAK…IRIPMFLEKF (87 aa)) the chain is on the cytoplasmic side. Position 22 is a phosphoserine (S22). Residues 88 to 108 (MLFALLTSLDCFLYYFTVLPI) traverse the membrane as a helical segment. Over 109-151 (RLIKGYVKQFKSYRQHYRLQQRSGHKNKIPFRYRITSREYKER) the chain is Lumenal. The helical transmembrane segment at 152 to 172 (CMIFIIVISSILLSKLDTSKL) threads the bilayer. Residues 173–224 (YHRIKRQSTMKLYMLFSVLEMADKMLASLGQSLLTVMLSRKNSERILLHKCL) are Cytoplasmic-facing. A helical membrane pass occupies residues 225-245 (LVSMSLTYVTIHGYVLVYQAI). Over 246-330 (SLNIAVNSYS…INFWSPRSTL (85 aa)) the chain is Lumenal. The N-linked (GlcNAc...) asparagine glycan is linked to N318. Residues 331 to 351 (SIVINILCGPMVSVVGSEVLV) traverse the membrane as a helical segment. Residues 352-391 (DWAKHAYITKFNRIRPQIYDKFYYIIYKDYSTRTHKLEDR) are Cytoplasmic-facing. Residues 392–412 (LGLPLPAFVVLFIVMVRPTLF) form a helical membrane-spanning segment. Residues 413-428 (KSSEPSYLPSLFRILF) are Lumenal-facing. A helical transmembrane segment spans residues 429–449 (MGASVFLLALLAKFTLDLILI). The Cytoplasmic segment spans residues 450-556 (KWSKRIEQRF…RYKMVSKRIW (107 aa)).

The protein belongs to the TAPT1 family. As to quaternary structure, interacts with SLP1.

Its subcellular location is the endoplasmic reticulum membrane. It is found in the mitochondrion. Its function is as follows. May be involved in membrane protein folding. This Saccharomyces cerevisiae (strain ATCC 204508 / S288c) (Baker's yeast) protein is Endoplasmic reticulum membrane protein 65.